The sequence spans 1406 residues: DNA-directed RNA polymerase subunit beta' (1406 aa).

Positions 72, 74, 87, and 90 each coordinate Zn(2+). Residues aspartate 462, aspartate 464, and aspartate 466 each contribute to the Mg(2+) site. Zn(2+)-binding residues include cysteine 816, cysteine 891, cysteine 898, and cysteine 901.

This sequence belongs to the RNA polymerase beta' chain family. In terms of assembly, the RNAP catalytic core consists of 2 alpha, 1 beta, 1 beta' and 1 omega subunit. When a sigma factor is associated with the core the holoenzyme is formed, which can initiate transcription. Mg(2+) serves as cofactor. The cofactor is Zn(2+).

The enzyme catalyses RNA(n) + a ribonucleoside 5'-triphosphate = RNA(n+1) + diphosphate. DNA-dependent RNA polymerase catalyzes the transcription of DNA into RNA using the four ribonucleoside triphosphates as substrates. The chain is DNA-directed RNA polymerase subunit beta' from Psychrobacter arcticus (strain DSM 17307 / VKM B-2377 / 273-4).